We begin with the raw amino-acid sequence, 905 residues long: Protein translocase subunit SecA (905 aa).

Residues Gln-87, 105–109, and Asp-512 contribute to the ATP site; that span reads GEGKT. The tract at residues 565–584 is disordered; sequence RRIDNQLRGRSGRQGDPGSS. Zn(2+) contacts are provided by Cys-886, Cys-888, Cys-897, and His-898.

The protein belongs to the SecA family. Monomer and homodimer. Part of the essential Sec protein translocation apparatus which comprises SecA, SecYEG and auxiliary proteins SecDF-YajC and YidC. Requires Zn(2+) as cofactor.

Its subcellular location is the cell inner membrane. The protein localises to the cytoplasm. The enzyme catalyses ATP + H2O + cellular proteinSide 1 = ADP + phosphate + cellular proteinSide 2.. In terms of biological role, part of the Sec protein translocase complex. Interacts with the SecYEG preprotein conducting channel. Has a central role in coupling the hydrolysis of ATP to the transfer of proteins into and across the cell membrane, serving both as a receptor for the preprotein-SecB complex and as an ATP-driven molecular motor driving the stepwise translocation of polypeptide chains across the membrane. The polypeptide is Protein translocase subunit SecA (Haemophilus ducreyi (strain 35000HP / ATCC 700724)).